Here is a 1129-residue protein sequence, read N- to C-terminus: MEVTVKTLDSQTRTFTVDAEITVKEFKTHISSDVGISPEKQRLIYQGRVLQEDKKLKEYNVDGKVIHLVERAPPQTQPSTGGPSTSSSTSPSSSNAANVPGAGAPERNGNSYVMVGTFNLPHVMSGLGEASRGPRVSTVSGNDGSTLDVHINLDQQLPVQSEPRVRLVLAQQILQDIQRILDRLEGQPVNEQTAEPMDTAVSEGEASSRETLPQTTQNTDGQSNTAPTSHPSPSEYVEVLQSLSRVEERLAPFMQRYREILSSATSDAYENQEEREQSQRIINLVGESLRLLGNALVAVSDLRCNLSSASPRHLHVVRPMSHYTGPMLLQQAAIPIQINVGTTVTMTGNGTHAGQMPSDGNAAHTPTNTSEPQRSNSDNQPPSSGERPASEIPPTSVPHPHPRVVRITHQTVEPVMMMHMNIQDSGPGGPTNIPPPTAGHGGSAHIHMPGLPPEFMQAISHQITQQAVAAASGQQIPGFQAPPRFVFTRPAAPSFPPQPGVATTPPGPGGATTAVPGATVGPAGNASLAQMISGLVGQLLMHPVIVAQGGSNTPSSTSTPTSTSSSSSSSSSTVTTSTTTTSSTSFPTVSSGPSPQPPPGTDQHLSQLLGSLLGTAGSGMSNFAMGSPSITVTVPGMPAFLQGVTDILQATQTVPVSTSPPQSASQAPPPSSPSPPPAHSSPPPAAAPESLPPEFFTSVVQGVLSSMLGSLSAADQSGTESIAAFIQRLSGSHNIFQPDAEGPGGFFGDLLTLICHNFSLVDMVMLLHGHSQPLQNLQPQLRSFFLQEYLHQADPTPNNIQMASRNLTNGLEEYIRESFASVTVRDDVDITRTNLEFLQDQFNRITTHILHCADSTFGQRLLEMCNQSLFEWLALNLYCLRGDQSALTSVINERIRRLSLDVSPVLVSWVTSVLSLRLQVLLGQMPVTEGEIQRHIRRVGDVPQAPEASSQDQPMETTPVDCQNGAASPVPATTVEEVLFLPPQSSVPTICTDSEHPTQEDTGSEQWAASVPPEWVPVIRQDMQNQRKMKQQPPLSDAYLSGMPAKRRKTMQGEGPHLSLSEAVSRAMKATGAKPESSTDCVRRELDNSEAQGRYREQLCQDIQNILQDNESYSAQRFPNTQRAFRGDP.

In terms of domain architecture, Ubiquitin-like spans 1-76; it reads MEVTVKTLDS…HLVERAPPQT (76 aa). 8 disordered regions span residues 69–108, 187–235, 347–402, 490–518, 550–606, 654–692, 942–967, and 987–1009; these read VERAPPQTQPSTGGPSTSSSTSPSSSNAANVPGAGAPERN, QPVN…SPSE, TGNG…HPHP, PAAPSFPPQPGVATTPPGPGGATTAVPGA, GSNT…QHLS, VPVSTSPPQSASQAPPPSSPSPPPAHSSPPPAAAPESLP, VPQAPEASSQDQPMETTPVDCQNGAA, and VPTICTDSEHPTQEDTGSEQWAA. Low complexity predominate over residues 73–105; that stretch reads PPQTQPSTGGPSTSSSTSPSSSNAANVPGAGAP. 2 stretches are compositionally biased toward polar residues: residues 209–232 and 364–383; these read RETLPQTTQNTDGQSNTAPTSHPS and HTPTNTSEPQRSNSDNQPPS. 2 stretches are compositionally biased toward low complexity: residues 553 to 593 and 655 to 666; these read TPSS…SSGP and PVSTSPPQSASQ. The segment covering 667–686 has biased composition (pro residues); the sequence is APPPSSPSPPPAHSSPPPAA. The span at 947 to 956 shows a compositional bias: polar residues; the sequence is EASSQDQPME.

In terms of assembly, component of the bag6/bat3 complex.

It localises to the cytoplasm. It is found in the cytosol. The protein localises to the nucleus. The protein resides in the secreted. Its subcellular location is the extracellular exosome. ATP-independent molecular chaperone preventing the aggregation of misfolded and hydrophobic patches-containing proteins. Functions as part of a cytosolic protein quality control complex, the bag6/bat3 complex, which maintains these client proteins in a soluble state and participates in their proper delivery to the endoplasmic reticulum or alternatively can promote their sorting to the proteasome where they undergo degradation. The bag6/bat3 complex is involved in the post-translational delivery of tail-anchored/type II transmembrane proteins to the endoplasmic reticulum membrane. Similarly, the bag6/bat3 complex also functions as a sorting platform for proteins of the secretory pathway that are mislocalized to the cytosol either delivering them to the proteasome for degradation or to the endoplasmic reticulum. The bag6/bat3 complex also plays a role in the endoplasmic reticulum-associated degradation (ERAD), a quality control mechanism that eliminates unwanted proteins of the endoplasmic reticulum through their retrotranslocation to the cytosol and their targeting to the proteasome. It maintains these retrotranslocated proteins in an unfolded yet soluble state condition in the cytosol to ensure their proper delivery to the proteasome. Also required for selective ubiquitin-mediated degradation of defective nascent chain polypeptides by the proteasome. Also involved in endoplasmic reticulum stress-induced pre-emptive quality control, a mechanism that selectively attenuates the translocation of newly synthesized proteins into the endoplasmic reticulum and reroutes them to the cytosol for proteasomal degradation. May ensure the proper degradation of these proteins and thereby protects the endoplasmic reticulum from protein overload upon stress. By stabilizing a large spectrum of proteins, may indirectly affect different biological processes including apoptosis. By controlling the steady-state expression of the IGF1R receptor, indirectly regulates the insulin-like growth factor receptor signaling pathway. Its function is as follows. When nuclear, may also act as a component of some chromatin regulator complex. The polypeptide is Large proline-rich protein bag6 (Xenopus tropicalis (Western clawed frog)).